The chain runs to 306 residues: F-box/LRR-repeat protein At3g26922 (306 aa).

The F-box domain maps to 13–73 (EDRISDLPEA…QSEDETYSEI (61 aa)). LRR repeat units lie at residues 67–93 (DETY…HLGF), 98–122 (CRSV…VLHV), 138–170 (CETL…RLEN), 171–196 (VDYK…VVYR), 215–243 (LTIY…KIDG), and 263–288 (IMNV…SLAL).

The protein is F-box/LRR-repeat protein At3g26922 of Arabidopsis thaliana (Mouse-ear cress).